The primary structure comprises 356 residues: Uroporphyrinogen decarboxylase (356 aa).

Substrate-binding positions include 27-31 (RQAGR), D77, Y154, S209, and H327.

Belongs to the uroporphyrinogen decarboxylase family. In terms of assembly, homodimer.

It is found in the cytoplasm. The catalysed reaction is uroporphyrinogen III + 4 H(+) = coproporphyrinogen III + 4 CO2. It participates in porphyrin-containing compound metabolism; protoporphyrin-IX biosynthesis; coproporphyrinogen-III from 5-aminolevulinate: step 4/4. Functionally, catalyzes the decarboxylation of four acetate groups of uroporphyrinogen-III to yield coproporphyrinogen-III. The polypeptide is Uroporphyrinogen decarboxylase (Aromatoleum aromaticum (strain DSM 19018 / LMG 30748 / EbN1) (Azoarcus sp. (strain EbN1))).